We begin with the raw amino-acid sequence, 93 residues long: Small ribosomal subunit protein uS17 (93 aa).

Belongs to the universal ribosomal protein uS17 family. As to quaternary structure, part of the 30S ribosomal subunit.

In terms of biological role, one of the primary rRNA binding proteins, it binds specifically to the 5'-end of 16S ribosomal RNA. The protein is Small ribosomal subunit protein uS17 of Corynebacterium aurimucosum (strain ATCC 700975 / DSM 44827 / CIP 107346 / CN-1) (Corynebacterium nigricans).